The following is a 469-amino-acid chain: Cytoplasmic tRNA 2-thiolation protein 2 (469 aa).

Belongs to the CTU2/NCS2 family.

It is found in the cytoplasm. It participates in tRNA modification; 5-methoxycarbonylmethyl-2-thiouridine-tRNA biosynthesis. Functionally, plays a central role in 2-thiolation of mcm(5)S(2)U at tRNA wobble positions of tRNA(Lys), tRNA(Glu) and tRNA(Gln). May act by forming a heterodimer with NCS6 that ligates sulfur from thiocarboxylated URM1 onto the uridine of tRNAs at wobble position. Prior mcm(5) tRNA modification by the elongator complex is required for 2-thiolation. May also be involved in protein urmylation. The polypeptide is Cytoplasmic tRNA 2-thiolation protein 2 (Candida glabrata (strain ATCC 2001 / BCRC 20586 / JCM 3761 / NBRC 0622 / NRRL Y-65 / CBS 138) (Yeast)).